The primary structure comprises 141 residues: Large ribosomal subunit protein uL22c (141 aa).

Belongs to the universal ribosomal protein uL22 family. In terms of assembly, part of the 50S ribosomal subunit.

The protein localises to the plastid. The protein resides in the chloroplast. Its function is as follows. This protein binds specifically to 23S rRNA. The globular domain of the protein is located near the polypeptide exit tunnel on the outside of the subunit, while an extended beta-hairpin is found that lines the wall of the exit tunnel in the center of the 70S ribosome. The chain is Large ribosomal subunit protein uL22c (rpl22) from Chloranthus spicatus (Chulantree).